We begin with the raw amino-acid sequence, 1120 residues long: MMQWTSLVQKAQSFIDPANFTIPNLTSSSDRNPSKSSLFRQQFRLPDSQNPLQEITAELILPVSHTSSSASGAQSKNIDRGGNRYAGRLHLSERFLCFSTQPTSFLPSATLATSTYWAGQTNGTGPSGNGFTIPLCSIRRVERLNSQSHIFSLALTTWNGALGKQQAPGFTPQRFTIELVGSRQACERFCDGLKKNLRESMKEIENLRLVVNDCYSEYLLSGAKSKAQSADDPEARPPPDAGLGMLFRYPGDARKLRDRSKMRLWGEYFRENGRNATLIRQPTFHKLIRVGLPNRLRGEIWEVASGSLNLRLRSPKLYEQTLAKFEGQESLAIDEIEKDLNRSLPEYAGFQSEEGIGRLRRVLTAYSWTNAEIGYCQAMNIVVAALLIYMSEAQAFFLLSVLCDRLVPGYYSTTMYGTLLDQKVFESLVEKTMPILWDHLNKSDVQLSVVSLPWFLSLYINSMPLVFAFRVLDVFFLEGPKVLFQVGLAILRINGEELLDVQDDGSFISVLKSYFSRLDESAHPRSENPKLRAITRFQELMVVAFKEFSQITHQTITEQREKHKDAVLENIESFAKRTSIRNLGPESKKLSSDDLGAIYDRYYEVLYDYQQRQKVIEEEKKRQERKKSQRVSVIGPSVDREVGRVGLGPSPTHMDYNAFREFLAATAKWAIADSPGPSRKQSDSGSFRGLGRPTMNKRPSPADHEFMQRLFRKWSTDPDDGLSLQDVVNGIARLKGPRDIMNNITYFFDLYDDNGDGKVDREGILRMSEALLFLSRRGFDGTITPSQSTENLMPGKEEDKLSTGERFLGSVSSFIRRCFEYADPTKKTLEAEKLAETTDNLNSFSIGDDEEDLIDVGDDEVKSESTPSPEGETPGTPSLEPTERKRARSTSEAANPALDPNNPLHITLPTFRMVVLADELLEQFFDNYFPQSFHLSEQGAAAAQLPSLSSNLTTFSNIGAAKQQPTSSGPTVAGASGGIVPPNRGLRGVLDNIVTDGIRMAAEVKKRMDEAQRELERNALNRDDDDEDDEDDDGHHGTAPAIVGGISSWGAGAYGADPERRSVRETDRDLLEGAEVVNIRGKDDVSLLDDKDSHQESSSGQRTAAGSDDKVVSKVVEFES.

The region spanning 291–479 (GLPNRLRGEI…RVLDVFFLEG (189 aa)) is the Rab-GAP TBC domain. 5 disordered regions span residues 673–702 (DSPG…PSPA), 859–903 (DEVK…PNNP), 960–979 (AAKQ…SGGI), 1017–1068 (RNAL…ETDR), and 1081–1120 (GKDD…EFES). Low complexity predominate over residues 864-878 (ESTPSPEGETPGTPS). Residues 960-970 (AAKQQPTSSGP) are compositionally biased toward polar residues. Over residues 1023-1032 (DDDDEDDEDD) the composition is skewed to acidic residues. Composition is skewed to basic and acidic residues over residues 1057–1068 (DPERRSVRETDR) and 1081–1095 (GKDD…DSHQ).

The chain is Putative GTPase-activating protein AN11010 from Emericella nidulans (strain FGSC A4 / ATCC 38163 / CBS 112.46 / NRRL 194 / M139) (Aspergillus nidulans).